A 530-amino-acid polypeptide reads, in one-letter code: Chaperone Ric-8A (530 aa).

Residue Ser-435 is modified to Phosphoserine. Residues Thr-440 and Thr-442 each carry the phosphothreonine modification. Residues Ser-501, Ser-522, Ser-523, and Ser-527 each carry the phosphoserine modification.

This sequence belongs to the synembryn family. As to quaternary structure, interacts with GDP-bound G alpha proteins GNAI1, GNAO1 and GNAQ, and with GNA13 with lower affinity. Does not interact with G-alpha proteins when they are in complex with subunits beta and gamma. Interacts (via C-terminus) with RGS14; the interaction stimulates the dissociation of the complex between RGS14 and the active GTP-bound form of GNAI1. Interacts with NCS1; interaction is favored in the absence of Ca(2+) and myristoylation of NCS1 is not required. Post-translationally, phosphorylated at Ser-435 and Thr-440 by CK2, stabilizing its interface with G alpha proteins.

The protein resides in the cytoplasm. The protein localises to the cell cortex. Its function is as follows. Chaperone that specifically binds and folds nascent G alpha proteins prior to G protein heterotrimer formation, promoting their stability and activity: folds GNAI1, GNAO1, GNA13 and GNAQ. Does not fold G(s) G-alpha proteins GNAS nor GNAL. Also acts as a guanine nucleotide exchange factor (GEF) for G alpha proteins by stimulating exchange of bound GDP for free GTP. Involved in regulation of microtubule pulling forces during mitotic movement of chromosomes by stimulating G(i)-alpha protein (GNAI1), possibly leading to release G(i)-alpha-GTP and NuMA proteins from the NuMA-GPSM2-G(i)-alpha-GDP complex. Also acts as an activator for G(q)-alpha (GNAQ) protein by enhancing the G(q)-coupled receptor-mediated ERK activation. This is Chaperone Ric-8A (RIC8A) from Pongo abelii (Sumatran orangutan).